A 644-amino-acid polypeptide reads, in one-letter code: uncharacterized protein (644 aa).

Residues 1-39 (MKANGLDNDPARTRMERTDIDSEHPEAQPLLNNNHRTLG) are disordered. Residues 1–90 (MKANGLDNDP…ILNILILINT (90 aa)) are Cytoplasmic-facing. Residues 9 to 26 (DPARTRMERTDIDSEHPE) are compositionally biased toward basic and acidic residues. Phosphoserine occurs at positions 22, 56, and 63. Residues 91–111 (IWLVTTLISDFFFNINILFGF) traverse the membrane as a helical segment. Topologically, residues 112 to 122 (SNRYASFNDLT) are vacuolar. A helical transmembrane segment spans residues 123-143 (LIFISIIANSFNLWFNKLGLY). At 144–147 (SALD) the chain is on the cytoplasmic side. The chain crosses the membrane as a helical span at residues 148 to 168 (YSLNVTLCVLTLFNLALTYLI). At 169–174 (KYTRQR) the chain is on the vacuolar side. The chain crosses the membrane as a helical span at residues 175-195 (IGFVGTFTYLWTSFSFFIGAI). The Cytoplasmic portion of the chain corresponds to 196–271 (LDWYLLFYNN…EWVSIGFRNT (76 aa)). The disordered stretch occupies residues 225–251 (NENHTNSTENRDRSQYGSGSPTPTHRS). Residues 239 to 251 (QYGSGSPTPTHRS) show a composition bias toward polar residues. Ser-244 bears the Phosphoserine mark. A helical membrane pass occupies residues 272–292 (IKFLILIFFALFTLNTLLTTL). The Vacuolar segment spans residues 293 to 644 (DTYRLTHKLP…IGELGKLTED (352 aa)). The AB hydrolase-1 domain maps to 348-619 (PIILFEHGGY…IVEGGHEIYK (272 aa)). Residues 469-492 (GRGDGDDGDDGNGNDGDGRNHDKT) form a disordered region.

It is found in the vacuole membrane. This is an uncharacterized protein from Saccharomyces cerevisiae (strain YJM789) (Baker's yeast).